The sequence spans 296 residues: Trimeric intracellular cation channel type A (296 aa).

At 1-19 the chain is on the lumenal side; sequence MELPGALQLGELAAAFASV. Residues 20 to 37 form a helical membrane-spanning segment; the sequence is PVFPLFDAAYFIVSVLYL. The Cytoplasmic portion of the chain corresponds to 38–51; sequence KYEPGAVEMSRKSP. A helical membrane pass occupies residues 52–73; that stretch reads FASWLCAMLHCFGSYILADLLL. G74 provides a ligand contact to Ca(2+). Topologically, residues 74 to 85 are lumenal; sequence GESPIHYFSNNS. Residues 86 to 103 form a helical membrane-spanning segment; that stretch reads SVILATAVWYLIFFCPMN. At 104 to 107 the chain is on the cytoplasmic side; that stretch reads LFYK. Residues 108-126 traverse the membrane as a helical segment; that stretch reads CVSFLPVKLIFVAMKEVVR. A 1,2-diacyl-sn-glycero-3-phospho-(1D-myo-inositol-4,5-bisphosphate)-binding residues include K122 and R126. Residues 127-144 lie on the Lumenal side of the membrane; the sequence is VRKIAAGVHHAHHQYHHG. Residues 145-162 form a helical membrane-spanning segment; it reads WFIMMATGWVKGSGVALM. The Cytoplasmic segment spans residues 163-183; the sequence is SNFEQLLRGVWRPETNEILHM. A helical membrane pass occupies residues 184–201; that stretch reads SFPTKASLYGTVLFTLQQ. The Lumenal portion of the chain corresponds to 202–209; the sequence is THWLPVSE. A helical membrane pass occupies residues 210 to 230; it reads ANLVFFFTMFMIVCKVFMTAT. Over 231–273 the chain is Cytoplasmic; that stretch reads HSHASPFAPVEGFICPVFFGSVSSGHTSHHNQHGHSHEASYQP. Residues 256 to 296 form a disordered region; it reads HTSHHNQHGHSHEASYQPPPPVKSKEELNEGTRKRKAKKAE. Residues 278-287 show a composition bias toward basic and acidic residues; that stretch reads KSKEELNEGT.

It belongs to the TMEM38 family. Homotrimer; conformation seems to be controled by binding to diacylglycerol (DAG).

The protein localises to the sarcoplasmic reticulum membrane. The protein resides in the nucleus membrane. It carries out the reaction K(+)(in) = K(+)(out). Its activity is regulated as follows. Channel activity is activated by a change of voltage within the sarcoplasmic reticulum lumen and blocked by luminal high Ca(2+) levels. In terms of biological role, intracellular monovalent cation channel required for maintenance of rapid intracellular calcium release. Acts as a potassium counter-ion channel that functions in synchronization with calcium release from intracellular stores. Opened by a change of voltage within the sarcoplasmic reticulum lumen. This Gallus gallus (Chicken) protein is Trimeric intracellular cation channel type A (TMEM38A).